The chain runs to 64 residues: Large ribosomal subunit protein bL33c (64 aa).

This sequence belongs to the bacterial ribosomal protein bL33 family.

The protein resides in the plastid. It localises to the chloroplast. The sequence is that of Large ribosomal subunit protein bL33c from Huperzia lucidula (Shining clubmoss).